The primary structure comprises 392 residues: ATP phosphoribosyltransferase regulatory subunit (392 aa).

The protein belongs to the class-II aminoacyl-tRNA synthetase family. HisZ subfamily. In terms of assembly, heteromultimer composed of HisG and HisZ subunits.

The protein resides in the cytoplasm. It functions in the pathway amino-acid biosynthesis; L-histidine biosynthesis; L-histidine from 5-phospho-alpha-D-ribose 1-diphosphate: step 1/9. In terms of biological role, required for the first step of histidine biosynthesis. May allow the feedback regulation of ATP phosphoribosyltransferase activity by histidine. The chain is ATP phosphoribosyltransferase regulatory subunit from Synechococcus sp. (strain CC9902).